A 491-amino-acid chain; its full sequence is Cyclin-A1-3 (491 aa).

Low complexity predominate over residues 1 to 21; it reads MSSSLASRRSSSSSAAKRPAA. Disordered regions lie at residues 1-32 and 69-106; these read MSSSLASRRSSSSSAAKRPAAGEGGGKAAAGA and SLASGRNVGTNRVSAVKSASTKPASAISRHESAPQKES. Over residues 75–91 the composition is skewed to polar residues; it reads NVGTNRVSAVKSASTKP.

Belongs to the cyclin family. Cyclin AB subfamily.

In Oryza sativa subsp. japonica (Rice), this protein is Cyclin-A1-3 (CYCA1-3).